Here is a 60-residue protein sequence, read N- to C-terminus: MKNTILILFTAFIALLGFFGMSAEALADPKADPLAGPNPDADPEAINLKAITALAKKLLG.

Positions Met1–Ala27 are cleaved as a signal peptide. 4 AXPX repeats span residues Ala27–Lys30, Ala31–Leu34, Ala35–Asn38, and Ala41–Glu44. Residues Asp28–Ala45 constitute a propeptide that is removed on maturation. Leu59 is subject to Leucine amide.

Belongs to the MCD family. Mastoparan subfamily. Expressed by the venom gland.

It is found in the secreted. Its function is as follows. The synthetic peptide shows antimicrobial activities against Gram-negative bacteria (but not against all strains tested), Gram-positive bacteria (all strains tested) and the fungi C.albicans and C.parapsilosis. Exhibits moderate hemolytic activity (25% at 100 ug/ml) against washed human erythrocytes. This chain is Mastoparan-VT3, found in Vespa tropica (Greater banded hornet).